Here is a 304-residue protein sequence, read N- to C-terminus: ATP synthase gamma chain (304 aa).

This sequence belongs to the ATPase gamma chain family. As to quaternary structure, F-type ATPases have 2 components, CF(1) - the catalytic core - and CF(0) - the membrane proton channel. CF(1) has five subunits: alpha(3), beta(3), gamma(1), delta(1), epsilon(1). CF(0) has three main subunits: a, b and c.

It localises to the cell membrane. Functionally, produces ATP from ADP in the presence of a proton gradient across the membrane. The gamma chain is believed to be important in regulating ATPase activity and the flow of protons through the CF(0) complex. This chain is ATP synthase gamma chain, found in Mycobacterium ulcerans (strain Agy99).